The sequence spans 43 residues: Hainantoxin F5-22.36 (43 aa).

3 disulfides stabilise this stretch: Cys-1–Cys-19, Cys-8–Cys-24, and Cys-18–Cys-38.

It belongs to the neurotoxin 14 (magi-1) family. 02 (HWTX-XVIc) subfamily. As to expression, expressed by the venom gland.

The protein resides in the secreted. Probable ion channel inhibitor. The sequence is that of Hainantoxin F5-22.36 from Cyriopagopus hainanus (Chinese bird spider).